The chain runs to 539 residues: MHDKILILDFGSQVTQLIARRVREAHVYCEIHPNDVSDDFVREFAPKAVILSGSHASTYEDHQLRAPQAVWDLGVPVLGICYGMQTMAVQLGGKVEWSDHREFGYAEMRAHGHTRLLDDIEDFTTAEGHGMLKVWMSHGDKVAELPPGFALMASTPSCPIAGMADEARGYYAVQFHPEVTHTVKGRQIIERFVLQIAGAKPDWIMKNHIEEAVAKIREQVGDEEVILGLSGGVDSSVAAALIHRAIGDQLTCVFVDHGLLRLNEGKMVLDMFEGRLHAKVVHVDASDQFLGHLAGVTDPEAKRKIIGREFVEVFQAEAKKLSKAKWLAQGTIYPDVVESGGTKTKKATTIKSHHNVGGLPETLGLKLLEPLRDLFKDEVRELGVALGLPPEMVYRHPFPGPGLGVRILGEVKREYADLLRRADAIFIEELRGTTATAQDAAAGLCGEADVGKSWYDLTSQAFAVFLPVKSVGVMGDGRTYDYVTSLRAVQTTDFMTAHWAHLPYALLGRASNRIINEVRGINRVVYDISGKPPATIEWE.

The Glutamine amidotransferase type-1 domain occupies 4 to 202 (KILILDFGSQ…VLQIAGAKPD (199 aa)). Residue C81 is the Nucleophile of the active site. Catalysis depends on residues H176 and E178. Positions 203–395 (WIMKNHIEEA…LGLPPEMVYR (193 aa)) constitute a GMPS ATP-PPase domain. An ATP-binding site is contributed by 230–236 (SGGVDSS).

In terms of assembly, homodimer.

The catalysed reaction is XMP + L-glutamine + ATP + H2O = GMP + L-glutamate + AMP + diphosphate + 2 H(+). Its pathway is purine metabolism; GMP biosynthesis; GMP from XMP (L-Gln route): step 1/1. Functionally, catalyzes the synthesis of GMP from XMP. This is GMP synthase [glutamine-hydrolyzing] from Burkholderia cenocepacia (strain ATCC BAA-245 / DSM 16553 / LMG 16656 / NCTC 13227 / J2315 / CF5610) (Burkholderia cepacia (strain J2315)).